The chain runs to 129 residues: Small ribosomal subunit protein uS11 (129 aa).

It belongs to the universal ribosomal protein uS11 family. In terms of assembly, part of the 30S ribosomal subunit. Interacts with proteins S7 and S18. Binds to IF-3.

Its function is as follows. Located on the platform of the 30S subunit, it bridges several disparate RNA helices of the 16S rRNA. Forms part of the Shine-Dalgarno cleft in the 70S ribosome. The sequence is that of Small ribosomal subunit protein uS11 from Francisella tularensis subsp. mediasiatica (strain FSC147).